The chain runs to 621 residues: uncharacterized protein (621 aa).

The first 15 residues, 1–15, serve as a signal peptide directing secretion; it reads MRRSVCYVTPSVARA.

This sequence belongs to the chlamydial CPn_0512/CT_425/TC_0708 family.

This is an uncharacterized protein from Chlamydia trachomatis serovar D (strain ATCC VR-885 / DSM 19411 / UW-3/Cx).